We begin with the raw amino-acid sequence, 493 residues long: Ribose import ATP-binding protein RbsA (493 aa).

2 consecutive ABC transporter domains span residues 3–239 (IEMK…VGRE) and 246–493 (KRTP…TGGR). 35 to 42 (GENGAGKS) lines the ATP pocket.

This sequence belongs to the ABC transporter superfamily. Ribose importer (TC 3.A.1.2.1) family. In terms of assembly, the complex is composed of an ATP-binding protein (RbsA), two transmembrane proteins (RbsC) and a solute-binding protein (RbsB).

The protein localises to the cell membrane. It catalyses the reaction D-ribose(out) + ATP + H2O = D-ribose(in) + ADP + phosphate + H(+). Part of the ABC transporter complex RbsABC involved in ribose import. Responsible for energy coupling to the transport system. In Bacillus subtilis (strain 168), this protein is Ribose import ATP-binding protein RbsA.